Here is a 180-residue protein sequence, read N- to C-terminus: Ribosome-recycling factor (180 aa).

This sequence belongs to the RRF family.

It is found in the cytoplasm. Responsible for the release of ribosomes from messenger RNA at the termination of protein biosynthesis. May increase the efficiency of translation by recycling ribosomes from one round of translation to another. This Chlamydia felis (strain Fe/C-56) (Chlamydophila felis) protein is Ribosome-recycling factor.